Here is a 493-residue protein sequence, read N- to C-terminus: Amphoterin-induced protein 1 (493 aa).

The N-terminal stretch at 1 to 27 is a signal peptide; the sequence is MQPQRDLRGLWLLLLSLFLLLFEVARA. In terms of domain architecture, LRRNT spans 28–61; it reads GRPVVSCPANCLCASNILSCSKQQLPNVPQSLPG. Residues 28–372 lie on the Extracellular side of the membrane; the sequence is GRPVVSCPAN…LHGHHDTLNT (345 aa). 2 disulfide bridges follow: cysteine 34–cysteine 40 and cysteine 38–cysteine 47. LRR repeat units follow at residues 62–83, 87–108, 111–132, 135–156, 159–179, and 186–206; these read YTAL…WTPT, NLHS…AFVP, NLRY…LFSG, ALEV…AFED, QLQK…ELIK, and KLTL…TDLQ. Asparagine 72 is a glycosylation site (N-linked (GlcNAc...) asparagine). The 52-residue stretch at 221–272 folds into the LRRCT domain; the sequence is NPLECDCKLYQLFSHWQYRQLSSVMDFQEDLYCVHSKKLHNVFSLDFFNCSE. 3 disulfides stabilise this stretch: cysteine 225–cysteine 253, cysteine 227–cysteine 270, and cysteine 290–cysteine 341. N-linked (GlcNAc...) asparagine glycans are attached at residues asparagine 269, asparagine 315, asparagine 349, and asparagine 360. An Ig-like C2-type domain is found at 269 to 353; that stretch reads NCSEYKESAW…MGETFNETLS (85 aa). A helical membrane pass occupies residues 373 to 393; sequence AYTTLVGCILSVVLVLIYLYL. The Cytoplasmic segment spans residues 394–493; sequence TPCRCWCRGV…SVFSDTPIVV (100 aa). The interval 405 to 493 is disordered; that stretch reads KPSSHQGDSL…SVFSDTPIVV (89 aa). Polar residues predominate over residues 408 to 424; that stretch reads SHQGDSLSSSMLSTTPN. The segment covering 431–442 has biased composition (basic and acidic residues); it reads GDKDDGFDRRVA. Serine 477 and serine 481 each carry phosphoserine.

The protein belongs to the immunoglobulin superfamily. AMIGO family. Homodimer, and heterodimer with AMIGO2 and AMIGO3. Interacts with KCNB1.

It is found in the cell membrane. Its subcellular location is the perikaryon. The protein resides in the cell projection. The protein localises to the dendrite. It localises to the axon. Functionally, promotes growth and fasciculation of neurites from cultured hippocampal neurons. May be involved in fasciculation as well as myelination of developing neural axons. May have a role in regeneration as well as neural plasticity in the adult nervous system. May mediate homophilic as well as heterophilic cell-cell interaction and contribute to signal transduction through its intracellular domain. Assembled with KCNB1 modulates the gating characteristics of the delayed rectifier voltage-dependent potassium channel KCNB1. This Rattus norvegicus (Rat) protein is Amphoterin-induced protein 1.